Consider the following 495-residue polypeptide: MKYRDLRDFLSLLEQRGELKRISQPIDPYLEMTEIADRTLRAGGPALLFENPKGYSMPVLCNLFGTAKRVAMGMGQEDVSALRDVGKLLAFLKEPDPPKGFRDLFDKLPKFKQVLNMPTKRLNSAPCQEQVWQGEDVDLSRIPVMHCWPEDAAPLVSWGLTITRGPHKERQNLGIYRQQVLGKNKLIMRWLSHRGGALDYQEWCEAHPGERFPVAVALGADPATILAAVTPVPDTLSEYAFAGLLRGHKTEVVKCLSNDLEVPASAEIVLEGYIEQGDMAPEGPYGDHTGYYNEIDNFPVFTVTHITQRQDAIYHSTYTGRPPDEPAVMGVALNEVFVPILQKQFPEIVDFYLPPEGCSYRLAVVTIKKQYAGHAKRVMMGIWSFLRQFMYTKFVIVCDDDINARDWNDVIWAITTRMDPSRDTVLIENTPIDYLDFASPVSGLGSKMGLDATNKWPAETPREWGRPIKMDEDVRARIDALWDELAIFSDKDAKR.

N172 is a binding site for Mn(2+). Residues 175 to 177 (IYR), 189 to 191 (RWL), and 194 to 195 (RG) contribute to the prenylated FMN site. E238 provides a ligand contact to Mn(2+). The Proton donor role is filled by D287.

The protein belongs to the UbiD family. As to quaternary structure, homohexamer. Requires prenylated FMN as cofactor. The cofactor is Mn(2+).

The protein resides in the cell membrane. The enzyme catalyses a 4-hydroxy-3-(all-trans-polyprenyl)benzoate + H(+) = a 2-(all-trans-polyprenyl)phenol + CO2. The protein operates within cofactor biosynthesis; ubiquinone biosynthesis. In terms of biological role, catalyzes the decarboxylation of 3-octaprenyl-4-hydroxy benzoate to 2-octaprenylphenol, an intermediate step in ubiquinone biosynthesis. The protein is 3-octaprenyl-4-hydroxybenzoate carboxy-lyase of Yersinia pestis bv. Antiqua (strain Angola).